The following is a 111-amino-acid chain: MAVKIRLARGGAKKRPFYRVVIANATAPRDGDFLEKVGTYNPMLASDNSERVVLKKDRIEYWLSTGAKPTERVAKFIEKAGVTLPKNVKKEMEVKAKNRKVRPSKKESKES.

It belongs to the bacterial ribosomal protein bS16 family.

The chain is Small ribosomal subunit protein bS16 from Rickettsia typhi (strain ATCC VR-144 / Wilmington).